The sequence spans 191 residues: Imidazoleglycerol-phosphate dehydratase (191 aa).

It belongs to the imidazoleglycerol-phosphate dehydratase family.

The protein localises to the cytoplasm. The enzyme catalyses D-erythro-1-(imidazol-4-yl)glycerol 3-phosphate = 3-(imidazol-4-yl)-2-oxopropyl phosphate + H2O. It participates in amino-acid biosynthesis; L-histidine biosynthesis; L-histidine from 5-phospho-alpha-D-ribose 1-diphosphate: step 6/9. This chain is Imidazoleglycerol-phosphate dehydratase, found in Methanococcoides burtonii (strain DSM 6242 / NBRC 107633 / OCM 468 / ACE-M).